Reading from the N-terminus, the 109-residue chain is MAMTDTEFHQLADDMFQAIETAIETAIDEQDADVDIDASGNVLQLEFVDGSKIVINKQEPLHEIWVATRFGGYHFGFVDGKWIDGRNGGEFMPFVQDSILRQSGIALSF.

It belongs to the frataxin family.

In terms of biological role, involved in iron-sulfur (Fe-S) cluster assembly. May act as a regulator of Fe-S biogenesis. The polypeptide is Iron-sulfur cluster assembly protein CyaY (Shewanella sp. (strain ANA-3)).